The following is a 32-amino-acid chain: Ranatuerin-2BYa (32 aa).

An intrachain disulfide couples Cys-27 to Cys-32.

As to expression, expressed by the skin glands.

The protein localises to the secreted. Its function is as follows. Antibacterial activity against Gram-positive bacterium S.aureus and Gram-negative bacterium E.coli. Weak hemolytic activity. The polypeptide is Ranatuerin-2BYa (Rana boylii (Foothill yellow-legged frog)).